The primary structure comprises 476 residues: Glycogen synthase (476 aa).

Lysine 15 provides a ligand contact to ADP-alpha-D-glucose.

This sequence belongs to the glycosyltransferase 1 family. Bacterial/plant glycogen synthase subfamily.

The catalysed reaction is [(1-&gt;4)-alpha-D-glucosyl](n) + ADP-alpha-D-glucose = [(1-&gt;4)-alpha-D-glucosyl](n+1) + ADP + H(+). The protein operates within glycan biosynthesis; glycogen biosynthesis. In terms of biological role, synthesizes alpha-1,4-glucan chains using ADP-glucose. The protein is Glycogen synthase (glgA) of Haemophilus influenzae (strain ATCC 51907 / DSM 11121 / KW20 / Rd).